A 95-amino-acid chain; its full sequence is MLQSNEYFSGKVKSIGFTSSSTGRASVGVMAEGEYTFGTAEPEEMTVISGALNVLLPGETEWKVYTAGQVFNVPGHSEFHLQVAEPTSYLCRYLK.

Belongs to the nucleoside phosphorylase PpnP family.

The catalysed reaction is a purine D-ribonucleoside + phosphate = a purine nucleobase + alpha-D-ribose 1-phosphate. It catalyses the reaction adenosine + phosphate = alpha-D-ribose 1-phosphate + adenine. The enzyme catalyses cytidine + phosphate = cytosine + alpha-D-ribose 1-phosphate. It carries out the reaction guanosine + phosphate = alpha-D-ribose 1-phosphate + guanine. The catalysed reaction is inosine + phosphate = alpha-D-ribose 1-phosphate + hypoxanthine. It catalyses the reaction thymidine + phosphate = 2-deoxy-alpha-D-ribose 1-phosphate + thymine. The enzyme catalyses uridine + phosphate = alpha-D-ribose 1-phosphate + uracil. It carries out the reaction xanthosine + phosphate = alpha-D-ribose 1-phosphate + xanthine. Its function is as follows. Catalyzes the phosphorolysis of diverse nucleosides, yielding D-ribose 1-phosphate and the respective free bases. Can use uridine, adenosine, guanosine, cytidine, thymidine, inosine and xanthosine as substrates. Also catalyzes the reverse reactions. The polypeptide is Pyrimidine/purine nucleoside phosphorylase (Enterobacter sp. (strain 638)).